The following is a 617-amino-acid chain: Dihydroxy-acid dehydratase (617 aa).

Asp-81 is a Mg(2+) binding site. A [2Fe-2S] cluster-binding site is contributed by Cys-122. Mg(2+) is bound by residues Asp-123 and Lys-124. At Lys-124 the chain carries N6-carboxylysine. Cys-195 serves as a coordination point for [2Fe-2S] cluster. Glu-491 lines the Mg(2+) pocket. The active-site Proton acceptor is the Ser-517.

This sequence belongs to the IlvD/Edd family. As to quaternary structure, homodimer. [2Fe-2S] cluster is required as a cofactor. Mg(2+) serves as cofactor.

It catalyses the reaction (2R)-2,3-dihydroxy-3-methylbutanoate = 3-methyl-2-oxobutanoate + H2O. The enzyme catalyses (2R,3R)-2,3-dihydroxy-3-methylpentanoate = (S)-3-methyl-2-oxopentanoate + H2O. Its pathway is amino-acid biosynthesis; L-isoleucine biosynthesis; L-isoleucine from 2-oxobutanoate: step 3/4. The protein operates within amino-acid biosynthesis; L-valine biosynthesis; L-valine from pyruvate: step 3/4. In terms of biological role, functions in the biosynthesis of branched-chain amino acids. Catalyzes the dehydration of (2R,3R)-2,3-dihydroxy-3-methylpentanoate (2,3-dihydroxy-3-methylvalerate) into 2-oxo-3-methylpentanoate (2-oxo-3-methylvalerate) and of (2R)-2,3-dihydroxy-3-methylbutanoate (2,3-dihydroxyisovalerate) into 2-oxo-3-methylbutanoate (2-oxoisovalerate), the penultimate precursor to L-isoleucine and L-valine, respectively. This Buchnera aphidicola subsp. Schizaphis graminum (strain Sg) protein is Dihydroxy-acid dehydratase.